Reading from the N-terminus, the 328-residue chain is Malate dehydrogenase (328 aa).

11 to 17 provides a ligand contact to NAD(+); that stretch reads GAAGQIG. 2 residues coordinate substrate: Arg94 and Arg100. NAD(+) is bound by residues Asn107, Gln114, and 131–133; that span reads VGN. Substrate contacts are provided by Asn133 and Arg164. His189 (proton acceptor) is an active-site residue.

This sequence belongs to the LDH/MDH superfamily. MDH type 2 family.

It catalyses the reaction (S)-malate + NAD(+) = oxaloacetate + NADH + H(+). Catalyzes the reversible oxidation of malate to oxaloacetate. In Stenotrophomonas maltophilia (strain K279a), this protein is Malate dehydrogenase.